A 299-amino-acid chain; its full sequence is Mitochondrial 2-oxodicarboxylate carrier (299 aa).

Solcar repeat units follow at residues 11–100 (REAS…YKKL), 107–196 (SPAL…VKNM), and 205–294 (LEFL…TYSW). The next 6 helical transmembrane spans lie at 17–37 (IVAG…LDVV), 70–89 (FGFY…KRAV), 113–133 (TIAG…FEVV), 167–187 (GLNK…MVYF), 205–225 (LEFL…SVIN), and 277–297 (LGPG…WLQE).

This sequence belongs to the mitochondrial carrier (TC 2.A.29) family.

The protein localises to the mitochondrion inner membrane. It carries out the reaction 2-oxoadipate(in) + 2-oxoglutarate(out) = 2-oxoadipate(out) + 2-oxoglutarate(in). The enzyme catalyses hexanedioate(in) + 2-oxoglutarate(out) = hexanedioate(out) + 2-oxoglutarate(in). The catalysed reaction is L-2-aminoadipate(in) + 2-oxoglutarate(out) = L-2-aminoadipate(out) + 2-oxoglutarate(in). It catalyses the reaction glutarate(in) + 2-oxoglutarate(out) = glutarate(out) + 2-oxoglutarate(in). It carries out the reaction 2-oxoheptanedioate(in) + 2-oxoglutarate(out) = 2-oxoheptanedioate(out) + 2-oxoglutarate(in). The enzyme catalyses heptanedioate(in) + 2-oxoglutarate(out) = heptanedioate(out) + 2-oxoglutarate(in). The catalysed reaction is citrate(in) + 2-oxoglutarate(out) = citrate(out) + 2-oxoglutarate(in). Transports dicarboxylates across the inner membranes of mitochondria by a counter-exchange mechanism. Can transport 2-oxoadipate (2-oxohexanedioate), 2-oxoglutarate, adipate (hexanedioate), glutarate, and to a lesser extent, pimelate (heptanedioate), 2-oxopimelate (2-oxoheptanedioate), 2-aminoadipate (2-aminohexanedioate), oxaloacetate, and citrate. Plays a central role in catabolism of lysine, hydroxylysine, and tryptophan, by transporting common metabolite intermediates (such as 2-oxoadipate) into the mitochondria, where it is converted into acetyl-CoA and can enter the citric acid (TCA) cycle. The chain is Mitochondrial 2-oxodicarboxylate carrier (SLC25A21) from Pongo abelii (Sumatran orangutan).